We begin with the raw amino-acid sequence, 37 residues long: Large ribosomal subunit protein bL36 (37 aa).

The protein belongs to the bacterial ribosomal protein bL36 family.

The polypeptide is Large ribosomal subunit protein bL36 (Streptomyces griseus subsp. griseus (strain JCM 4626 / CBS 651.72 / NBRC 13350 / KCC S-0626 / ISP 5235)).